Reading from the N-terminus, the 862-residue chain is Transcription factor E2F7 (862 aa).

DNA-binding regions lie at residues 140–209 (RKQK…CWHG) and 279–364 (RKDK…KWIG). 3 disordered regions span residues 561-592 (PGSD…DAPL), 617-643 (TPEQ…NVGE), and 788-862 (KADS…SAGN). Positions 564 to 574 (DSPTLEETTMS) are enriched in polar residues. Over residues 575–590 (KQERPTKRQLNDKDDA) the composition is skewed to basic and acidic residues. 2 stretches are compositionally biased toward polar residues: residues 633-643 (EPVTKHSNVGE) and 832-851 (DVSS…SSAQ).

The protein belongs to the E2F/DP family. Homodimer and heterodimer: mainly forms homodimers and, to a lesser extent, heterodimers with e2f8.

It is found in the nucleus. In terms of biological role, atypical E2F transcription factor that participates in various processes such as angiogenesis and polyploidization of specialized cells. Mainly acts as a transcription repressor that binds DNA independently of DP proteins and specifically recognizes the E2 recognition site 5'-TTTC[CG]CGC-3'. Directly represses transcription of classical E2F transcription factors such as e2f1. Acts as a regulator of S-phase by recognizing and binding the E2-related site 5'-TTCCCGCC-3' and mediating repression of G1/S-regulated genes. Acts as a promoter of sprouting angiogenesis, possibly by acting as a transcription activator. In Xenopus tropicalis (Western clawed frog), this protein is Transcription factor E2F7 (e2f7).